A 65-amino-acid polypeptide reads, in one-letter code: Small ribosomal subunit protein bS21 (65 aa).

A disordered region spans residues 43–65 (VDDRLKRARSKRRAQRANEESNA). Residues 48 to 57 (KRARSKRRAQ) show a composition bias toward basic residues.

This sequence belongs to the bacterial ribosomal protein bS21 family.

The protein is Small ribosomal subunit protein bS21 of Chloroherpeton thalassium (strain ATCC 35110 / GB-78).